A 614-amino-acid polypeptide reads, in one-letter code: Zinc metalloproteinase-disintegrin-like protein H4 subunit A (614 aa).

The first 20 residues, M1–S20, serve as a signal peptide directing secretion. A propeptide spanning residues I21 to S193 is cleaved from the precursor. Position 194 is a pyrrolidone carboxylic acid (Glu) (E194). The 197-residue stretch at K201 to P397 folds into the Peptidase M12B domain. N220 is a glycosylation site (N-linked (GlcNAc...) asparagine). Disulfide bonds link C312/C392, C352/C376, C354/C359, C408/C437, C419/C432, C421/C427, C431/C454, C445/C451, C450/C476, C463/C483, C470/C502, C495/C507, C514/C564, C529/C575, C542/C552, C559/C601, and C595/C607. H337 is a binding site for Zn(2+). The short motif at H337 to D348 is the Metal-binding element. The active-site Proton acceptor is the E338. Positions 341 and 347 each coordinate Zn(2+). One can recognise a Disintegrin domain in the interval P405–N491. Positions 410, 412, 414, 417, and 420 each coordinate Ca(2+). The N-linked (GlcNAc...) asparagine glycan is linked to N433. The D/ECD-tripeptide signature appears at E469–D471. Residues D471 and D486 each coordinate Ca(2+).

The protein belongs to the venom metalloproteinase (M12B) family. P-III subfamily. As to quaternary structure, homodimer; disulfide-linked. Heterodimer of A and B subunits; disulfide-linked. It depends on Zn(2+) as a cofactor. Post-translationally, N-glycosylated. In terms of processing, the N-terminus is blocked. In terms of tissue distribution, expressed by the venom gland (at protein level). Expressed by the venom gland.

It localises to the secreted. With respect to regulation, the proteolytic activity of the heterodimer of A and B subunits requires Zn(2+) and Ca(2+) ions. In terms of biological role, heterodimer (A and B subunits): Zinc metalloprotease that has fibrinogenolytic and hemorrhagic activities. Cleaves insulin B chain preferably at '40-Tyr-|-Leu-41' bond, but also at '28-Gln-|-His-29' and '34-His-|-Leu-35' bonds. Hydrolyzes effectively isolated extracellular matrix (ECM) bovine fibronectin, and only slightly, basal membrane (BM) proteins human collagen IV and murine laminin, in vitro. Cleaves nidogen-1 (at '350-Ser-|-Phe-351' and '380-Tyr-|-Asn-381' bonds), but not laminin, in a solubilized BM preparation. Hydrolyzes plasma proteins involved in blood coagulation in vitro. It slightly shortens prothrombin time and significantly prolongs thrombin time. Has potent alpha-fibrinogenase activity cleaving human fibrinogen alpha chain at '441-Glu-|-Leu-442' and '539-Glu-|-Phe-540' bonds, and to a lesser extent, beta chain at '52-Lys-|-Arg-53' and '48-Pro-|-Leu-49' bonds, but does not cleave gamma chain. Hydrolyzes bovine prothrombin at '200-Ser-|-Gly-201' bond, but does not activate it, however, it cleaves fragment 1 and prethrombin 1 from it. Hydrolyzes bovine factor X heavy chain, but the cleavage does not produce an activated factor Xa heavy chain. No hydrolysis or activation of plasminogen. The ability to degrade some of the ECM, BM and plasma proteins is likely the main contributor to its hemorrhagic activity. Inhibits platelet aggregation induced by collagen in vitro. Its binding to glycosaminoglycans (GAGs) may assist in concentrating it in the proximity of blood vessel walls enabling in vivo degradation of BM protein components. Cytotoxic to cultured HeLa cancer cells in a concentration- and time-dependent manner. In the solubilized BM preparation (Matrigel), it induces morphological changes in the HeLa cells and inhibits their adhesion, however, the viability of the cells is not reduced. The sequence is that of Zinc metalloproteinase-disintegrin-like protein H4 subunit A from Vipera ammodytes ammodytes (Western sand viper).